The chain runs to 139 residues: Protein spalt-accessory (139 aa).

An N-terminal signal peptide occupies residues 1–16 (MKLLIALLALVTAAIA). Gly residues predominate over residues 60–75 (GIGQGGVHPGQGGFAG). The interval 60–139 (GIGQGGVHPG…HHEHHGHHRH (80 aa)) is disordered. The span at 109–121 (NPHEYPEHHGEHH) shows a compositional bias: basic and acidic residues. Positions 122–139 (REHHEHHGHHEHHGHHRH) are enriched in basic residues.

The protein resides in the secreted. Likely to be involved in the establishment of the head. The sequence is that of Protein spalt-accessory (sala) from Drosophila simulans (Fruit fly).